Here is a 381-residue protein sequence, read N- to C-terminus: uncharacterized protein (381 aa).

Helical transmembrane passes span 10 to 29 (IFFS…INFY), 75 to 93 (IILI…LIIL), 98 to 117 (LIKI…FTSR), 130 to 147 (YLFL…NLMV), 157 to 179 (TNNT…FLHY), 199 to 221 (IELQ…WYYE), 236 to 255 (LILK…ICYI), 262 to 284 (YFAN…IHGT), 289 to 311 (NILY…ILIL), 323 to 340 (ALLS…AGAL), and 355 to 374 (LFSV…WYFI).

Its subcellular location is the cell membrane. This is an uncharacterized protein from Rickettsia prowazekii (strain Madrid E).